The sequence spans 494 residues: MTPTVNAKTVTRNVGWSVLSKTGTFGLKFVTVPILARILSPEEFGAVAVALTVVQFLAMIGGAGLTSALVIQQHEEMETVHSVFWANLAIALMMALGLFVFAEPLATLLGAPEAAYLLRIMSLLIPLQLGGDVAYSLLVRRMNFRKDAVWSMISESLGAVIAVLLALLGFGIWSLLAQLFVSALVRLSGLYAVSRYAPRFVFSLQRVLALSRFSFGMMGSEIANFITFQSPMVVISRYLGLSDAGAYSAANRFASIPNQVVLSAVMGVLFPTFGQMMHDRERRSQALMLSTQVTTVLLAPMMFGLWALAEPAMLVLFGSQWAYAWPVLGLLALSKGILTPCSTFIPYLKGVGQGAVLFWWALIRAVATTGAVAYGAIDGSLVEAMIWLCIVNAVTLVGYSWVVFRADSTPFLKGLFISSRPMIAALLMALVVRFLLEHFGAHVPNAVLQLIAGTAIGSVIYTVLILLTERSLLRRLLDMARARKPRAAPAGAAE.

13 helical membrane passes run 16-36 (WSVL…PILA), 44-64 (FGAV…GGAG), 82-102 (SVFW…FVFA), 105-125 (LATL…SLLI), 157-177 (LGAV…SLLA), 215-235 (FGMM…MVVI), 253-273 (FASI…FPTF), 297-317 (LLAP…LVLF), 321-341 (WAYA…LTPC), 343-363 (TFIP…WALI), 384-404 (AMIW…WVVF), 421-441 (PMIA…HFGA), and 447-467 (VLQL…LILL).

Belongs to the polysaccharide synthase family.

The protein localises to the cell membrane. The protein operates within glycan metabolism; exopolysaccharide biosynthesis. The chain is Succinoglycan biosynthesis transport protein ExoT (exoT) from Rhizobium meliloti (strain 1021) (Ensifer meliloti).